We begin with the raw amino-acid sequence, 183 residues long: MNITQIIEKLKQNEVVAYPTEAVFGLGCNPFSQSAVEKLLILKQRPREKGLILVAPKLDYFFSFIDKEQINSQHWQKLQQTYPRPITWIVPAKKDIAKFLCGNFNSIAIRVSQHPAIKILCEQTGFALTSTSANLSGIAPCKTSDEVRLQFGADFPVLDMSVGSATKPSEIRDLFTNQLVRQG.

Positions 1-183 (MNITQIIEKL…LFTNQLVRQG (183 aa)) constitute a YrdC-like domain.

It belongs to the SUA5 family. TsaC subfamily.

It is found in the cytoplasm. The catalysed reaction is L-threonine + hydrogencarbonate + ATP = L-threonylcarbamoyladenylate + diphosphate + H2O. Functionally, required for the formation of a threonylcarbamoyl group on adenosine at position 37 (t(6)A37) in tRNAs that read codons beginning with adenine. Catalyzes the conversion of L-threonine, HCO(3)(-)/CO(2) and ATP to give threonylcarbamoyl-AMP (TC-AMP) as the acyladenylate intermediate, with the release of diphosphate. The sequence is that of Threonylcarbamoyl-AMP synthase from Histophilus somni (strain 2336) (Haemophilus somnus).